Reading from the N-terminus, the 677-residue chain is Methionine--tRNA ligase (677 aa).

The 'HIGH' region signature appears at 15-25; that stretch reads PYANGSIHLGH. 4 residues coordinate Zn(2+): cysteine 146, cysteine 149, cysteine 159, and cysteine 162. Positions 333-337 match the 'KMSKS' region motif; sequence KMSKS. Lysine 336 lines the ATP pocket. The region spanning 575–677 is the tRNA-binding domain; it reads DFAKIDLRVA…DGAKPGQQVK (103 aa).

It belongs to the class-I aminoacyl-tRNA synthetase family. MetG type 1 subfamily. As to quaternary structure, homodimer. Requires Zn(2+) as cofactor.

The protein resides in the cytoplasm. It carries out the reaction tRNA(Met) + L-methionine + ATP = L-methionyl-tRNA(Met) + AMP + diphosphate. In terms of biological role, is required not only for elongation of protein synthesis but also for the initiation of all mRNA translation through initiator tRNA(fMet) aminoacylation. This Salmonella paratyphi B (strain ATCC BAA-1250 / SPB7) protein is Methionine--tRNA ligase.